Reading from the N-terminus, the 369-residue chain is Phosphoribosyl pyrophosphate synthase-associated protein 2 (369 aa).

Met1 is subject to N-acetylmethionine. Thr5 bears the Phosphothreonine mark. Phosphoserine occurs at positions 219, 227, and 233.

This sequence belongs to the ribose-phosphate pyrophosphokinase family. Binds to PRPS1 and PRPS2. As to expression, ubiquitous.

In terms of biological role, seems to play a negative regulatory role in 5-phosphoribose 1-diphosphate synthesis. The chain is Phosphoribosyl pyrophosphate synthase-associated protein 2 (PRPSAP2) from Homo sapiens (Human).